We begin with the raw amino-acid sequence, 330 residues long: Aspartate--ammonia ligase (330 aa).

The protein belongs to the class-II aminoacyl-tRNA synthetase family. AsnA subfamily.

The protein localises to the cytoplasm. The enzyme catalyses L-aspartate + NH4(+) + ATP = L-asparagine + AMP + diphosphate + H(+). The protein operates within amino-acid biosynthesis; L-asparagine biosynthesis; L-asparagine from L-aspartate (ammonia route): step 1/1. This is Aspartate--ammonia ligase from Photorhabdus laumondii subsp. laumondii (strain DSM 15139 / CIP 105565 / TT01) (Photorhabdus luminescens subsp. laumondii).